A 483-amino-acid polypeptide reads, in one-letter code: Probable cytosol aminopeptidase (483 aa).

Mn(2+) is bound by residues Lys252 and Asp257. Residue Lys264 is part of the active site. Positions 275, 334, and 336 each coordinate Mn(2+). The active site involves Arg338.

This sequence belongs to the peptidase M17 family. Requires Mn(2+) as cofactor.

The protein localises to the cytoplasm. The catalysed reaction is Release of an N-terminal amino acid, Xaa-|-Yaa-, in which Xaa is preferably Leu, but may be other amino acids including Pro although not Arg or Lys, and Yaa may be Pro. Amino acid amides and methyl esters are also readily hydrolyzed, but rates on arylamides are exceedingly low.. It catalyses the reaction Release of an N-terminal amino acid, preferentially leucine, but not glutamic or aspartic acids.. In terms of biological role, presumably involved in the processing and regular turnover of intracellular proteins. Catalyzes the removal of unsubstituted N-terminal amino acids from various peptides. The sequence is that of Probable cytosol aminopeptidase from Legionella pneumophila (strain Paris).